A 133-amino-acid polypeptide reads, in one-letter code: Small ribosomal subunit protein uS8 (133 aa).

The protein belongs to the universal ribosomal protein uS8 family. As to quaternary structure, part of the 30S ribosomal subunit. Contacts proteins S5 and S12.

In terms of biological role, one of the primary rRNA binding proteins, it binds directly to 16S rRNA central domain where it helps coordinate assembly of the platform of the 30S subunit. This chain is Small ribosomal subunit protein uS8, found in Micrococcus luteus (Micrococcus lysodeikticus).